A 126-amino-acid chain; its full sequence is MKMILAVAAGGGLGAVARYLTGVGLGHWLGTAYPWATMTVNVTGSFAMGVLAGLGAHVWQPAPELRAFLMVGVLGGFTTFSSFSLDVALLVERGAIGAAAAYVAASFLLSVGGLFAGLALIRTAVA.

The next 4 helical transmembrane spans lie at 3–23 (MILA…LTGV), 39–59 (TVNV…AHVW), 71–91 (VGVL…ALLV), and 101–121 (AYVA…LALI). Residues Gly75 and Thr78 each contribute to the Na(+) site.

It belongs to the fluoride channel Fluc/FEX (TC 1.A.43) family.

It is found in the cell inner membrane. The catalysed reaction is fluoride(in) = fluoride(out). Na(+) is not transported, but it plays an essential structural role and its presence is essential for fluoride channel function. Fluoride-specific ion channel. Important for reducing fluoride concentration in the cell, thus reducing its toxicity. This is Fluoride-specific ion channel FluC from Rhodospirillum centenum (strain ATCC 51521 / SW).